The chain runs to 565 residues: CTP synthase (565 aa).

Residues 1-272 (MARPKNVKHI…DLRVMKKLGL (272 aa)) are amidoligase domain. Ser18 provides a ligand contact to CTP. Residue Ser18 participates in UTP binding. Residue 19–24 (SLGKGI) coordinates ATP. Tyr59 provides a ligand contact to L-glutamine. Asp76 lines the ATP pocket. Asp76 and Glu146 together coordinate Mg(2+). Residues 153 to 155 (DIE), 193 to 198 (KTKPTQ), and Lys229 each bind CTP. UTP is bound by residues 193–198 (KTKPTQ) and Lys229. The Glutamine amidotransferase type-1 domain occupies 299 to 543 (TIGICGKYTE…VHAAKEFAQG (245 aa)). Gly363 is an L-glutamine binding site. Cys390 functions as the Nucleophile; for glutamine hydrolysis in the catalytic mechanism. Residues 391–394 (LGMQ), Glu414, and Arg471 contribute to the L-glutamine site. Catalysis depends on residues His516 and Glu518.

This sequence belongs to the CTP synthase family. Homotetramer.

The enzyme catalyses UTP + L-glutamine + ATP + H2O = CTP + L-glutamate + ADP + phosphate + 2 H(+). It carries out the reaction L-glutamine + H2O = L-glutamate + NH4(+). It catalyses the reaction UTP + NH4(+) + ATP = CTP + ADP + phosphate + 2 H(+). It participates in pyrimidine metabolism; CTP biosynthesis via de novo pathway; CTP from UDP: step 2/2. Allosterically activated by GTP, when glutamine is the substrate; GTP has no effect on the reaction when ammonia is the substrate. The allosteric effector GTP functions by stabilizing the protein conformation that binds the tetrahedral intermediate(s) formed during glutamine hydrolysis. Inhibited by the product CTP, via allosteric rather than competitive inhibition. In terms of biological role, catalyzes the ATP-dependent amination of UTP to CTP with either L-glutamine or ammonia as the source of nitrogen. Regulates intracellular CTP levels through interactions with the four ribonucleotide triphosphates. The sequence is that of CTP synthase from Chlorobaculum tepidum (strain ATCC 49652 / DSM 12025 / NBRC 103806 / TLS) (Chlorobium tepidum).